Reading from the N-terminus, the 465-residue chain is Presenilin spe-4 (465 aa).

Topologically, residues 1 to 18 (MDTLRSISSELVRSSQLR) are cytoplasmic. A helical membrane pass occupies residues 19-39 (WTLFSVIANMSLTLSIWIGVY). Residues 40 to 71 (NMEVNSELSKTYFLDPSFEQTTGNLLLDGFIN) are Lumenal-facing. A helical membrane pass occupies residues 72–92 (GVGTILVLGCVSFIMLAFVLF). The Cytoplasmic segment spans residues 93 to 96 (DFRR). Residues 97-117 (IVKAWLTLSCLLILFGVSAQT) form a helical membrane-spanning segment. At 118–136 (LHDMFSQVFDQDDNNQYYM) the chain is on the lumenal side. The helical transmembrane segment at 137 to 157 (TIVLIVVPTVVYGFGGIYAFF) threads the bilayer. The Cytoplasmic segment spans residues 158–160 (SNS). Residues 161 to 181 (SLILHQIFVVTNCSLISVFYL) form a helical membrane-spanning segment. Topologically, residues 182 to 190 (RVFPSKTTW) are lumenal. A helical membrane pass occupies residues 191–211 (FVLWIVLFWDLFAVLAPMGPL). Residue D200 is part of the active site. Residues 212 to 389 (KKVQEKASDY…DALNDGEVLR (178 aa)) are Cytoplasmic-facing. The tract at residues 287–356 (INPDSVPTEH…SDISTAEECD (70 aa)) is disordered. Over residues 326–350 (SETSSGSSNLSSSDSSTTVSTSDIS) the composition is skewed to low complexity. The chain crosses the membrane as a helical span at residues 390-410 (LGFGDFVFYSLLIGQAAASGC). D394 is an active-site residue. A topological domain (lumenal) is located at residue P411. The helical transmembrane segment at 412–432 (FAVISAALGILFGLVVTLTVF) threads the bilayer. Residues 433–439 (STEESTT) lie on the Cytoplasmic side of the membrane. The PAL signature appears at 440–442 (PAL). The segment at residues 440–460 (PALPLPVICGTFCYFSSMFFW) is an intramembrane region (helical). Over 461–465 (EQLYG) the chain is Cytoplasmic.

It belongs to the peptidase A22A family. Homodimer. Potential component of the gamma-secretase complex, a complex probably composed of the presenilin homodimer (sel-12, hop-1 or spe-4), nicastrin (aph-2), aph-1 and pen-2.

Its subcellular location is the endoplasmic reticulum membrane. The protein localises to the golgi apparatus. It is found in the cis-Golgi network membrane. Potential catalytic subunit of the gamma-secretase complex during spermatogenesis, an endoprotease complex that catalyzes the intramembrane cleavage of integral membrane proteins such as Notch receptors (lin-12 or glp-1). Involved in spermatid formation during meiosis II. May be required for proper localization of macromolecules that are subject to asymmetric partitioning during spermatogenesis. This is Presenilin spe-4 from Caenorhabditis elegans.